Here is a 324-residue protein sequence, read N- to C-terminus: DNA primase small subunit PriS (324 aa).

Residues aspartate 94, aspartate 96, and aspartate 274 contribute to the active site.

Belongs to the eukaryotic-type primase small subunit family. Heterodimer of a small subunit (PriS) and a large subunit (PriL). Requires Mg(2+) as cofactor. It depends on Mn(2+) as a cofactor.

Its function is as follows. Catalytic subunit of DNA primase, an RNA polymerase that catalyzes the synthesis of short RNA molecules used as primers for DNA polymerase during DNA replication. The small subunit contains the primase catalytic core and has DNA synthesis activity on its own. Binding to the large subunit stabilizes and modulates the activity, increasing the rate of DNA synthesis while decreasing the length of the DNA fragments, and conferring RNA synthesis capability. The DNA polymerase activity may enable DNA primase to also catalyze primer extension after primer synthesis. May also play a role in DNA repair. This chain is DNA primase small subunit PriS, found in Methanobrevibacter smithii (strain ATCC 35061 / DSM 861 / OCM 144 / PS).